Here is a 177-residue protein sequence, read N- to C-terminus: Superoxide dismutase [Cu-Zn] 1 (177 aa).

A signal peptide spans 1 to 20; the sequence is MKYTILSLVAGALISCSAMA. Cu cation-binding residues include histidine 69, histidine 71, and histidine 94. Cysteine 76 and cysteine 172 are joined by a disulfide. The Zn(2+) site is built by histidine 94, histidine 103, histidine 112, and aspartate 115. Histidine 150 serves as a coordination point for Cu cation.

Belongs to the Cu-Zn superoxide dismutase family. Monomer. Cu cation is required as a cofactor. Requires Zn(2+) as cofactor.

The protein localises to the periplasm. The catalysed reaction is 2 superoxide + 2 H(+) = H2O2 + O2. Its function is as follows. Destroys radicals which are normally produced within the cells and which are toxic to biological systems. This chain is Superoxide dismutase [Cu-Zn] 1 (sodC1), found in Salmonella typhimurium (strain 4/74).